Reading from the N-terminus, the 917-residue chain is Alanine--tRNA ligase (917 aa).

Residues His-615, His-619, Cys-719, and His-723 each contribute to the Zn(2+) site.

The protein belongs to the class-II aminoacyl-tRNA synthetase family. The cofactor is Zn(2+).

It localises to the cytoplasm. It carries out the reaction tRNA(Ala) + L-alanine + ATP = L-alanyl-tRNA(Ala) + AMP + diphosphate. Its function is as follows. Catalyzes the attachment of alanine to tRNA(Ala) in a two-step reaction: alanine is first activated by ATP to form Ala-AMP and then transferred to the acceptor end of tRNA(Ala). Also edits incorrectly charged Ser-tRNA(Ala) and Gly-tRNA(Ala) via its editing domain. The chain is Alanine--tRNA ligase from Thermococcus kodakarensis (strain ATCC BAA-918 / JCM 12380 / KOD1) (Pyrococcus kodakaraensis (strain KOD1)).